Consider the following 951-residue polypeptide: Kinase suppressor of Ras 2 (951 aa).

Residues 237–298 (PPPPPLESGH…PGTPPPSSRK (62 aa)) are disordered. Low complexity predominate over residues 260-274 (RTPPRTPNIVTTVTP). 2 positions are modified to phosphothreonine: threonine 273 and threonine 277. The Phorbol-ester/DAG-type zinc finger occupies 413–457 (KHRFSTKYWMSQTCTVCGKGMLFGLKCKNCKLKCHNKCTKEAPPC). Zn(2+) contacts are provided by histidine 414, cysteine 426, cysteine 429, cysteine 439, cysteine 442, histidine 447, cysteine 450, and cysteine 457. Serine 475 bears the Phosphoserine; by MARK3 mark. 2 disordered regions span residues 489-559 (RYSD…QKKN) and 614-634 (EPTS…DEFE). The segment covering 494-503 (HISQTLPKTN) has biased composition (polar residues). Threonine 498 carries the phosphothreonine modification. Residues 518 to 531 (SSSNPSSTTSSTPS) are compositionally biased toward low complexity. The span at 532 to 552 (SPAPPLPPSATPPSPLHPSPQ) shows a compositional bias: pro residues. The 266-residue stretch at 667–932 (LEIGELIGKG…TKLMDMLEKL (266 aa)) folds into the Protein kinase domain. 673–681 (IGKGRFGQV) provides a ligand contact to ATP. The Proton donor/acceptor role is filled by aspartate 787. ATP contacts are provided by lysine 789 and aspartate 804.

Belongs to the protein kinase superfamily. TKL Ser/Thr protein kinase family. Heterodimerizes (via N-terminus) with BRAF (via N-terminus) in a MAP2K1/MEK1-dependent manner. Interacts with BRAF; this increases the low intrinsic protein kinase activity of KSR2. Interacts with MAP2K1, forming a heterodimer that can dimerize to form a heterotetramer. Interacts with MAP3K8, MAPK, RAS and RAF. Phosphorylated on Ser-475 by MARK3.

Its subcellular location is the cytoplasm. The protein resides in the membrane. The enzyme catalyses L-seryl-[protein] + ATP = O-phospho-L-seryl-[protein] + ADP + H(+). The catalysed reaction is L-threonyl-[protein] + ATP = O-phospho-L-threonyl-[protein] + ADP + H(+). In terms of biological role, location-regulated scaffold connecting MEK to RAF. Has very low protein kinase activity and can phosphorylate MAP2K1 at several Ser and Thr residues with very low efficiency (in vitro). Acts as MAP2K1/MEK1-dependent allosteric activator of BRAF; upon binding to MAP2K1/MEK1, dimerizes with BRAF and promotes BRAF-mediated phosphorylation of MAP2K1/MEK1. Interaction with BRAF enhances KSR2-mediated phosphorylation of MAP2K1 (in vitro). Blocks MAP3K8 kinase activity and MAP3K8-mediated signaling. Acts as a negative regulator of MAP3K3-mediated activation of ERK, JNK and NF-kappa-B pathways, inhibiting MAP3K3-mediated interleukin-8 production. The chain is Kinase suppressor of Ras 2 from Mus musculus (Mouse).